The primary structure comprises 368 residues: Aminomethyltransferase (368 aa).

Belongs to the GcvT family. In terms of assembly, the glycine cleavage system is composed of four proteins: P, T, L and H.

It catalyses the reaction N(6)-[(R)-S(8)-aminomethyldihydrolipoyl]-L-lysyl-[protein] + (6S)-5,6,7,8-tetrahydrofolate = N(6)-[(R)-dihydrolipoyl]-L-lysyl-[protein] + (6R)-5,10-methylene-5,6,7,8-tetrahydrofolate + NH4(+). Functionally, the glycine cleavage system catalyzes the degradation of glycine. The sequence is that of Aminomethyltransferase from Thermoanaerobacter sp. (strain X514).